The following is a 197-amino-acid chain: dTTP/UTP pyrophosphatase (197 aa).

Asp-70 (proton acceptor) is an active-site residue.

Belongs to the Maf family. YhdE subfamily. Requires a divalent metal cation as cofactor.

The protein localises to the cytoplasm. The enzyme catalyses dTTP + H2O = dTMP + diphosphate + H(+). It carries out the reaction UTP + H2O = UMP + diphosphate + H(+). Its function is as follows. Nucleoside triphosphate pyrophosphatase that hydrolyzes dTTP and UTP. May have a dual role in cell division arrest and in preventing the incorporation of modified nucleotides into cellular nucleic acids. In Methanosarcina barkeri (strain Fusaro / DSM 804), this protein is dTTP/UTP pyrophosphatase.